The sequence spans 445 residues: Oxysterols receptor LXR-alpha (445 aa).

2 disordered regions span residues 1 to 34 and 62 to 86; these read MSLW…QGGN and TALL…KKGP. The segment at 1–94 is transactivation AF-1; required for ligand-independent transactivation function; it reads MSLWLEAAVP…GPAPKMLGNE (94 aa). The segment at residues 93–168 is a DNA-binding region (nuclear receptor); sequence NELCSVCGDK…AGMREECVLS (76 aa). 2 consecutive NR C4-type zinc fingers follow at residues 96–116 and 132–156; these read CSVC…CEGC and CHSG…LRKC. Positions 178–200 are disordered; sequence KRQEEEQAQATSVSPRVSSPPQV. The span at 189 to 200 shows a compositional bias: low complexity; the sequence is SVSPRVSSPPQV. A Phosphoserine modification is found at Ser191. Residues 203 to 445 form a transactivation AF-2; required for ligand-dependent transactivation function; mediates interaction with CCAR2 region; that stretch reads QLSPEQLGMI…LLSEIWDVHE (243 aa). The NR LBD domain maps to 207 to 445; that stretch reads EQLGMIEKLV…LLSEIWDVHE (239 aa).

The protein belongs to the nuclear hormone receptor family. NR1 subfamily. Heterodimer of NR1H3 and RXR (retinoic acid receptor). Interacts with CCAR2 (via N-terminus) in a ligand-independent manner. Interacts with SIRT1 and this interaction is inhibited by CCAR2. Post-translationally, ubiquitinated by UBR5, leading to its degradation: UBR5 specifically recognizes and binds ligand-bound NR1H3 when it is not associated with coactivators (NCOAs). In presence of NCOAs, the UBR5-degron is not accessible, preventing its ubiquitination and degradation. As to expression, in adults it is expressed in spleen, pituitary, lung, liver, and fat. Weaker expression is observed in several other tissues.

The protein resides in the nucleus. It is found in the cytoplasm. Nuclear receptor that exhibits a ligand-dependent transcriptional activation activity. Interaction with retinoic acid receptor (RXR) shifts RXR from its role as a silent DNA-binding partner to an active ligand-binding subunit in mediating retinoid responses through target genes defined by LXRES. LXRES are DR4-type response elements characterized by direct repeats of two similar hexanuclotide half-sites spaced by four nucleotides. Plays an important role in the regulation of cholesterol homeostasis, regulating cholesterol uptake through MYLIP-dependent ubiquitination of LDLR, VLDLR and LRP8. Interplays functionally with RORA for the regulation of genes involved in liver metabolism. Induces LPCAT3-dependent phospholipid remodeling in endoplasmic reticulum (ER) membranes of hepatocytes, driving SREBF1 processing and lipogenesis. Via LPCAT3, triggers the incorporation of arachidonate into phosphatidylcholines of ER membranes, increasing membrane dynamics and enabling triacylglycerols transfer to nascent very low-density lipoprotein (VLDL) particles. Via LPCAT3 also counteracts lipid-induced ER stress response and inflammation, likely by modulating SRC kinase membrane compartmentalization and limiting the synthesis of lipid inflammatory mediators. The chain is Oxysterols receptor LXR-alpha (Nr1h3) from Rattus norvegicus (Rat).